We begin with the raw amino-acid sequence, 429 residues long: 3-phosphoshikimate 1-carboxyvinyltransferase (429 aa).

3 residues coordinate 3-phosphoshikimate: Lys22, Ser23, and Arg27. Lys22 lines the phosphoenolpyruvate pocket. The phosphoenolpyruvate site is built by Gly94 and Arg122. Positions 167, 169, 315, and 342 each coordinate 3-phosphoshikimate. A phosphoenolpyruvate-binding site is contributed by Gln169. The active-site Proton acceptor is Asp315. 2 residues coordinate phosphoenolpyruvate: Arg346 and Arg388.

Belongs to the EPSP synthase family. As to quaternary structure, monomer.

It is found in the cytoplasm. The catalysed reaction is 3-phosphoshikimate + phosphoenolpyruvate = 5-O-(1-carboxyvinyl)-3-phosphoshikimate + phosphate. It participates in metabolic intermediate biosynthesis; chorismate biosynthesis; chorismate from D-erythrose 4-phosphate and phosphoenolpyruvate: step 6/7. Catalyzes the transfer of the enolpyruvyl moiety of phosphoenolpyruvate (PEP) to the 5-hydroxyl of shikimate-3-phosphate (S3P) to produce enolpyruvyl shikimate-3-phosphate and inorganic phosphate. The sequence is that of 3-phosphoshikimate 1-carboxyvinyltransferase from Geobacter sulfurreducens (strain ATCC 51573 / DSM 12127 / PCA).